A 115-amino-acid chain; its full sequence is U3-lycotoxin-Ls1a (115 aa).

Positions 1–20 (MKFVLLFGVFLVTLFSYSSA) are cleaved as a signal peptide. Positions 21–44 (EMLDDFDQADEDELLSLIEKEEAR) are excised as a propeptide. 4 cysteine pairs are disulfide-bonded: Cys48–Cys63, Cys55–Cys72, Cys62–Cys87, and Cys74–Cys85.

Belongs to the neurotoxin 19 (CSTX) family. 01 subfamily. As to expression, expressed by the venom gland.

Its subcellular location is the secreted. The protein is U3-lycotoxin-Ls1a of Lycosa singoriensis (Wolf spider).